The sequence spans 473 residues: Serine palmitoyltransferase 1 (473 aa).

Over 1–15 (MATATEQWVLVEMVQ) the chain is Lumenal. Positions 1–66 (MATATEQWVL…KEELIEEWQP (66 aa)) are interaction with SPTLC2. Residues 16–36 (ALYEAPAYHLILEGILILWII) traverse the membrane as a helical segment. At 37–473 (RLLFSKTYKL…IKEVAQAVLL (437 aa)) the chain is on the cytoplasmic side. A Phosphotyrosine; by ABL modification is found at Y164.

Belongs to the class-II pyridoxal-phosphate-dependent aminotransferase family. In terms of assembly, component of the serine palmitoyltransferase (SPT) complex, which is also composed of SPTLC2 or SPTLC3 and SPTSSA or SPTSSB. The heterodimer consisting of SPTLC1 and SPTLC2/SPTLC3 forms the catalytic core of the enzyme, while SPTSSA or SPTSSB subunits determine substrate specificity. SPT also interacts with ORMDL proteins, especially ORMDL3, which negatively regulate SPT activity in the presence of ceramides. Forms dimers of heterodimers with SPTLC2. Interacts with RTN4 (isoform B). Requires pyridoxal 5'-phosphate as cofactor. Post-translationally, phosphorylation at Tyr-164 inhibits activity and promotes cell survival. As to expression, widely expressed. Not detected in small intestine.

It is found in the endoplasmic reticulum membrane. It catalyses the reaction L-serine + hexadecanoyl-CoA + H(+) = 3-oxosphinganine + CO2 + CoA. The catalysed reaction is octadecanoyl-CoA + L-serine + H(+) = 3-oxoeicosasphinganine + CO2 + CoA. The enzyme catalyses tetradecanoyl-CoA + L-serine + H(+) = 3-oxohexadecasphinganine + CO2 + CoA. It carries out the reaction dodecanoyl-CoA + L-serine + H(+) = 3-oxotetradecasphinganine + CO2 + CoA. It participates in lipid metabolism; sphingolipid metabolism. With respect to regulation, SPT complex catalytic activity is negatively regulated by ORMDL proteins, including ORMDL3, in the presence of ceramides. This mechanism allows to maintain ceramide levels at sufficient concentrations for the production of complex sphingolipids, but which prevents the accumulation of ceramides to levels that trigger apoptosis. In terms of biological role, component of the serine palmitoyltransferase multisubunit enzyme (SPT) that catalyzes the initial and rate-limiting step in sphingolipid biosynthesis by condensing L-serine and activated acyl-CoA (most commonly palmitoyl-CoA) to form long-chain bases. The SPT complex is also composed of SPTLC2 or SPTLC3 and SPTSSA or SPTSSB. Within this complex, the heterodimer with SPTLC2 or SPTLC3 forms the catalytic core. The composition of the serine palmitoyltransferase (SPT) complex determines the substrate preference. The SPTLC1-SPTLC2-SPTSSA complex shows a strong preference for C16-CoA substrate, while the SPTLC1-SPTLC3-SPTSSA isozyme uses both C14-CoA and C16-CoA as substrates, with a slight preference for C14-CoA. The SPTLC1-SPTLC2-SPTSSB complex shows a strong preference for C18-CoA substrate, while the SPTLC1-SPTLC3-SPTSSB isozyme displays an ability to use a broader range of acyl-CoAs, without apparent preference. Required for adipocyte cell viability and metabolic homeostasis. The sequence is that of Serine palmitoyltransferase 1 (SPTLC1) from Homo sapiens (Human).